Here is a 356-residue protein sequence, read N- to C-terminus: uncharacterized protein (356 aa).

37-44 (TGASSGIG) lines the NADP(+) pocket. Ser168 contacts substrate. Tyr181 functions as the Proton acceptor in the catalytic mechanism.

This sequence belongs to the short-chain dehydrogenases/reductases (SDR) family.

This is an uncharacterized protein from Bacillus subtilis (strain 168).